The sequence spans 229 residues: Ribonuclease HII (229 aa).

One can recognise an RNase H type-2 domain in the interval 34–223 (WPVAGADEAG…LRKSEDGPEM (190 aa)). Residues Asp-40, Glu-41, and Asp-131 each coordinate a divalent metal cation. The tract at residues 209–229 (MSFRPLRKSEDGPEMDELIPE) is disordered. The span at 220-229 (GPEMDELIPE) shows a compositional bias: acidic residues.

It belongs to the RNase HII family. It depends on Mn(2+) as a cofactor. Mg(2+) serves as cofactor.

The protein localises to the cytoplasm. The catalysed reaction is Endonucleolytic cleavage to 5'-phosphomonoester.. Endonuclease that specifically degrades the RNA of RNA-DNA hybrids. This is Ribonuclease HII from Rhizobium etli (strain CIAT 652).